We begin with the raw amino-acid sequence, 423 residues long: Heat shock transcription factor, X-linked (423 aa).

Residues methionine 1 to glutamate 25 show a composition bias toward basic and acidic residues. Disordered stretches follow at residues methionine 1–serine 56, lysine 215–glutamine 303, and proline 397–threonine 423. Residues proline 98 to serine 282 mediate DNA binding. A Glycyl lysine isopeptide (Lys-Gly) (interchain with G-Cter in SUMO1) cross-link involves residue lysine 215. A compositionally biased stretch (polar residues) spans histidine 243–proline 254.

It belongs to the HSF family. Testis-specific.

Its subcellular location is the nucleus. It localises to the cytoplasm. In Homo sapiens (Human), this protein is Heat shock transcription factor, X-linked (HSFX1).